Consider the following 317-residue polypeptide: Acetylglutamate kinase (317 aa).

Substrate contacts are provided by residues 70–71 (GG), R92, and N191.

This sequence belongs to the acetylglutamate kinase family. ArgB subfamily.

Its subcellular location is the cytoplasm. It carries out the reaction N-acetyl-L-glutamate + ATP = N-acetyl-L-glutamyl 5-phosphate + ADP. The protein operates within amino-acid biosynthesis; L-arginine biosynthesis; N(2)-acetyl-L-ornithine from L-glutamate: step 2/4. Functionally, catalyzes the ATP-dependent phosphorylation of N-acetyl-L-glutamate. The chain is Acetylglutamate kinase from Corynebacterium glutamicum (strain R).